Reading from the N-terminus, the 286-residue chain is ATP synthase gamma chain (286 aa).

It belongs to the ATPase gamma chain family. F-type ATPases have 2 components, CF(1) - the catalytic core - and CF(0) - the membrane proton channel. CF(1) has five subunits: alpha(3), beta(3), gamma(1), delta(1), epsilon(1). CF(0) has three main subunits: a, b and c.

It is found in the cell inner membrane. In terms of biological role, produces ATP from ADP in the presence of a proton gradient across the membrane. The gamma chain is believed to be important in regulating ATPase activity and the flow of protons through the CF(0) complex. The polypeptide is ATP synthase gamma chain (Pseudomonas aeruginosa (strain UCBPP-PA14)).